The sequence spans 130 residues: Small ribosomal subunit protein uS9 (130 aa).

Residues 105–115 (TRDSRQVERKK) are compositionally biased toward basic and acidic residues. Positions 105 to 130 (TRDSRQVERKKVGFRKSRKRTQFSKR) are disordered. The segment covering 116 to 130 (VGFRKSRKRTQFSKR) has biased composition (basic residues).

This sequence belongs to the universal ribosomal protein uS9 family.

The sequence is that of Small ribosomal subunit protein uS9 from Buchnera aphidicola subsp. Schizaphis graminum (strain Sg).